The following is a 468-amino-acid chain: Phenylalanine--tRNA ligase alpha subunit (468 aa).

Residues Thr311, 350–352 (QLD), and Phe390 each bind L-phenylalanine. Mg(2+) is bound at residue Glu392.

It belongs to the class-II aminoacyl-tRNA synthetase family. Phe-tRNA synthetase alpha subunit type 2 subfamily. As to quaternary structure, tetramer of two alpha and two beta subunits. It depends on Mg(2+) as a cofactor.

The protein localises to the cytoplasm. The enzyme catalyses tRNA(Phe) + L-phenylalanine + ATP = L-phenylalanyl-tRNA(Phe) + AMP + diphosphate + H(+). The protein is Phenylalanine--tRNA ligase alpha subunit of Saccharolobus solfataricus (strain ATCC 35092 / DSM 1617 / JCM 11322 / P2) (Sulfolobus solfataricus).